The following is a 208-amino-acid chain: Uracil phosphoribosyltransferase (208 aa).

5-phospho-alpha-D-ribose 1-diphosphate contacts are provided by residues Arg78, Arg103, and 130–138 (DPMLATGGS). Uracil-binding positions include Ile193 and 198-200 (GDA). Asp199 is a binding site for 5-phospho-alpha-D-ribose 1-diphosphate.

The protein belongs to the UPRTase family. Mg(2+) is required as a cofactor.

It catalyses the reaction UMP + diphosphate = 5-phospho-alpha-D-ribose 1-diphosphate + uracil. The protein operates within pyrimidine metabolism; UMP biosynthesis via salvage pathway; UMP from uracil: step 1/1. With respect to regulation, allosterically activated by GTP. Functionally, catalyzes the conversion of uracil and 5-phospho-alpha-D-ribose 1-diphosphate (PRPP) to UMP and diphosphate. The protein is Uracil phosphoribosyltransferase of Haemophilus influenzae (strain 86-028NP).